A 226-amino-acid chain; its full sequence is Guanylate kinase (226 aa).

Positions 13–193 constitute a Guanylate kinase-like domain; it reads GLLLVLSAPS…ALAQLQAIVR (181 aa). 20–27 serves as a coordination point for ATP; the sequence is APSGAGKT.

This sequence belongs to the guanylate kinase family.

It is found in the cytoplasm. It catalyses the reaction GMP + ATP = GDP + ADP. Essential for recycling GMP and indirectly, cGMP. This is Guanylate kinase from Anaeromyxobacter dehalogenans (strain 2CP-C).